A 702-amino-acid chain; its full sequence is Arginine decarboxylase 1 (702 aa).

Lys-151 is modified (N6-(pyridoxal phosphate)lysine). Residue 336–346 (IDVGGGLGIDY) participates in substrate binding. The segment covering 668–686 (ASGESSGMSSDSEGSAAGA) has biased composition (low complexity). Residues 668–702 (ASGESSGMSSDSEGSAAGAAEEDDDEWEFMRGLTV) form a disordered region.

The protein belongs to the Orn/Lys/Arg decarboxylase class-II family. SpeA subfamily. Pyridoxal 5'-phosphate is required as a cofactor. The cofactor is Mg(2+). Expressed in roots, leaves and stems (at protein level).

It carries out the reaction L-arginine + H(+) = agmatine + CO2. It participates in amine and polyamine biosynthesis; agmatine biosynthesis; agmatine from L-arginine: step 1/1. The polypeptide is Arginine decarboxylase 1 (ADC1) (Oryza sativa subsp. japonica (Rice)).